Here is a 273-residue protein sequence, read N- to C-terminus: Dermonecrotic toxin LspiSicTox-betaIE1i (273 aa).

Positions 25 and 27 each coordinate Mg(2+). The Nucleophile role is filled by histidine 41. Cysteine 45 and cysteine 51 are oxidised to a cystine. Aspartate 85 contacts Mg(2+).

Belongs to the arthropod phospholipase D family. Class I subfamily. The cofactor is Mg(2+). As to expression, expressed by the venom gland.

It localises to the secreted. It carries out the reaction an N-(acyl)-sphingosylphosphocholine = an N-(acyl)-sphingosyl-1,3-cyclic phosphate + choline. The catalysed reaction is an N-(acyl)-sphingosylphosphoethanolamine = an N-(acyl)-sphingosyl-1,3-cyclic phosphate + ethanolamine. It catalyses the reaction a 1-acyl-sn-glycero-3-phosphocholine = a 1-acyl-sn-glycero-2,3-cyclic phosphate + choline. The enzyme catalyses a 1-acyl-sn-glycero-3-phosphoethanolamine = a 1-acyl-sn-glycero-2,3-cyclic phosphate + ethanolamine. Dermonecrotic toxins cleave the phosphodiester linkage between the phosphate and headgroup of certain phospholipids (sphingolipid and lysolipid substrates), forming an alcohol (often choline) and a cyclic phosphate. This toxin acts on sphingomyelin (SM). It may also act on ceramide phosphoethanolamine (CPE), lysophosphatidylcholine (LPC) and lysophosphatidylethanolamine (LPE), but not on lysophosphatidylserine (LPS), and lysophosphatidylglycerol (LPG). It acts by transphosphatidylation, releasing exclusively cyclic phosphate products as second products. Induces dermonecrosis, hemolysis, increased vascular permeability, edema, inflammatory response, and platelet aggregation. The protein is Dermonecrotic toxin LspiSicTox-betaIE1i of Loxosceles spinulosa (Recluse spider).